We begin with the raw amino-acid sequence, 404 residues long: Phosphoglycerate kinase (404 aa).

Substrate contacts are provided by residues 22–24 (DLN), R37, 60–63 (HLGR), R119, and R156. ATP-binding positions include K206, G302, E333, and 359–362 (GGDS).

The protein belongs to the phosphoglycerate kinase family. Monomer.

Its subcellular location is the cytoplasm. The catalysed reaction is (2R)-3-phosphoglycerate + ATP = (2R)-3-phospho-glyceroyl phosphate + ADP. It participates in carbohydrate degradation; glycolysis; pyruvate from D-glyceraldehyde 3-phosphate: step 2/5. The chain is Phosphoglycerate kinase from Clavibacter michiganensis subsp. michiganensis (strain NCPPB 382).